Reading from the N-terminus, the 371-residue chain is tRNA-specific 2-thiouridylase MnmA (371 aa).

Residues 13–20 and Met-39 contribute to the ATP site; that span reads GMSGGVDS. An interaction with target base in tRNA region spans residues 99-101; the sequence is NPD. Cys-104 serves as the catalytic Nucleophile. Cysteines 104 and 200 form a disulfide. Gly-128 contacts ATP. The interval 150 to 152 is interaction with tRNA; it reads KDQ. The active-site Cysteine persulfide intermediate is the Cys-200. An interaction with tRNA region spans residues 308-309; it reads RY.

Belongs to the MnmA/TRMU family.

The protein localises to the cytoplasm. The catalysed reaction is S-sulfanyl-L-cysteinyl-[protein] + uridine(34) in tRNA + AH2 + ATP = 2-thiouridine(34) in tRNA + L-cysteinyl-[protein] + A + AMP + diphosphate + H(+). Functionally, catalyzes the 2-thiolation of uridine at the wobble position (U34) of tRNA, leading to the formation of s(2)U34. The chain is tRNA-specific 2-thiouridylase MnmA from Bacillus anthracis.